The primary structure comprises 83 residues: Alpha-neurotoxin NTX-2 (83 aa).

A signal peptide spans 1–21; the sequence is MKTLLLTLLVVTIVCLDLGYT. 4 disulfides stabilise this stretch: Cys24–Cys45, Cys38–Cys62, Cys64–Cys75, and Cys76–Cys81.

This sequence belongs to the three-finger toxin family. Short-chain subfamily. Type I alpha-neurotoxin sub-subfamily. Expressed by the venom gland.

The protein resides in the secreted. Binds to muscle nicotinic acetylcholine receptor (nAChR) and inhibit acetylcholine from binding to the receptor, thereby impairing neuromuscular transmission. The protein is Alpha-neurotoxin NTX-2 of Naja sputatrix (Malayan spitting cobra).